Consider the following 146-residue polypeptide: Flagellar assembly factor FliW 1 (146 aa).

This sequence belongs to the FliW family. In terms of assembly, interacts with translational regulator CsrA and flagellin(s).

It localises to the cytoplasm. Its function is as follows. Acts as an anti-CsrA protein, binds CsrA and prevents it from repressing translation of its target genes, one of which is flagellin. Binds to flagellin and participates in the assembly of the flagellum. The sequence is that of Flagellar assembly factor FliW 1 from Helicobacter hepaticus (strain ATCC 51449 / 3B1).